Here is a 286-residue protein sequence, read N- to C-terminus: Phosphatidylserine decarboxylase proenzyme (286 aa).

Active-site charge relay system; for autoendoproteolytic cleavage activity residues include aspartate 88, histidine 145, and serine 251. Serine 251 serves as the catalytic Schiff-base intermediate with substrate; via pyruvic acid; for decarboxylase activity. Serine 251 carries the post-translational modification Pyruvic acid (Ser); by autocatalysis.

Belongs to the phosphatidylserine decarboxylase family. PSD-B subfamily. Prokaryotic type I sub-subfamily. Heterodimer of a large membrane-associated beta subunit and a small pyruvoyl-containing alpha subunit. The cofactor is pyruvate. In terms of processing, is synthesized initially as an inactive proenzyme. Formation of the active enzyme involves a self-maturation process in which the active site pyruvoyl group is generated from an internal serine residue via an autocatalytic post-translational modification. Two non-identical subunits are generated from the proenzyme in this reaction, and the pyruvate is formed at the N-terminus of the alpha chain, which is derived from the carboxyl end of the proenzyme. The autoendoproteolytic cleavage occurs by a canonical serine protease mechanism, in which the side chain hydroxyl group of the serine supplies its oxygen atom to form the C-terminus of the beta chain, while the remainder of the serine residue undergoes an oxidative deamination to produce ammonia and the pyruvoyl prosthetic group on the alpha chain. During this reaction, the Ser that is part of the protease active site of the proenzyme becomes the pyruvoyl prosthetic group, which constitutes an essential element of the active site of the mature decarboxylase.

Its subcellular location is the cell membrane. It carries out the reaction a 1,2-diacyl-sn-glycero-3-phospho-L-serine + H(+) = a 1,2-diacyl-sn-glycero-3-phosphoethanolamine + CO2. It functions in the pathway phospholipid metabolism; phosphatidylethanolamine biosynthesis; phosphatidylethanolamine from CDP-diacylglycerol: step 2/2. Functionally, catalyzes the formation of phosphatidylethanolamine (PtdEtn) from phosphatidylserine (PtdSer). The sequence is that of Phosphatidylserine decarboxylase proenzyme from Verminephrobacter eiseniae (strain EF01-2).